Here is a 97-residue protein sequence, read N- to C-terminus: Putative pterin-4-alpha-carbinolamine dehydratase (97 aa).

It belongs to the pterin-4-alpha-carbinolamine dehydratase family.

It catalyses the reaction (4aS,6R)-4a-hydroxy-L-erythro-5,6,7,8-tetrahydrobiopterin = (6R)-L-erythro-6,7-dihydrobiopterin + H2O. The polypeptide is Putative pterin-4-alpha-carbinolamine dehydratase (Brucella abortus (strain S19)).